We begin with the raw amino-acid sequence, 271 residues long: Formamidopyrimidine-DNA glycosylase (271 aa).

Pro2 acts as the Schiff-base intermediate with DNA in catalysis. The active-site Proton donor is the Glu3. The active-site Proton donor; for beta-elimination activity is the Lys57. The DNA site is built by His90, Arg109, and Lys151. The FPG-type zinc-finger motif lies at 236 to 270 (HVYGRGGETCTQCGNLLSEIRLGQRTTVFCGICQT). The active-site Proton donor; for delta-elimination activity is Arg260.

This sequence belongs to the FPG family. Monomer. Zn(2+) serves as cofactor.

It catalyses the reaction Hydrolysis of DNA containing ring-opened 7-methylguanine residues, releasing 2,6-diamino-4-hydroxy-5-(N-methyl)formamidopyrimidine.. It carries out the reaction 2'-deoxyribonucleotide-(2'-deoxyribose 5'-phosphate)-2'-deoxyribonucleotide-DNA = a 3'-end 2'-deoxyribonucleotide-(2,3-dehydro-2,3-deoxyribose 5'-phosphate)-DNA + a 5'-end 5'-phospho-2'-deoxyribonucleoside-DNA + H(+). Involved in base excision repair of DNA damaged by oxidation or by mutagenic agents. Acts as a DNA glycosylase that recognizes and removes damaged bases. Has a preference for oxidized purines, such as 7,8-dihydro-8-oxoguanine (8-oxoG). Has AP (apurinic/apyrimidinic) lyase activity and introduces nicks in the DNA strand. Cleaves the DNA backbone by beta-delta elimination to generate a single-strand break at the site of the removed base with both 3'- and 5'-phosphates. This is Formamidopyrimidine-DNA glycosylase from Shewanella sp. (strain MR-7).